The chain runs to 379 residues: DNA-directed RNA polymerase subunit Rpo1C (379 aa).

It belongs to the RNA polymerase beta' chain family. As to quaternary structure, part of the RNA polymerase complex.

The protein resides in the cytoplasm. It carries out the reaction RNA(n) + a ribonucleoside 5'-triphosphate = RNA(n+1) + diphosphate. Its function is as follows. DNA-dependent RNA polymerase (RNAP) catalyzes the transcription of DNA into RNA using the four ribonucleoside triphosphates as substrates. Forms part of the jaw domain. The chain is DNA-directed RNA polymerase subunit Rpo1C from Pyrobaculum aerophilum (strain ATCC 51768 / DSM 7523 / JCM 9630 / CIP 104966 / NBRC 100827 / IM2).